Reading from the N-terminus, the 638-residue chain is ATP-dependent zinc metalloprotease FtsH (638 aa).

Residues 1–15 (MDNNHKGPNDPNSKK) are Cytoplasmic-facing. Residues 16–36 (PLLQNPLLLIAIFGIIIFVAM) form a helical membrane-spanning segment. At 37 to 122 (RVMNSDEGFG…INYSGFSESN (86 aa)) the chain is on the periplasmic side. A helical transmembrane segment spans residues 123–143 (FFADILGWLLPVLVILGLWMF). Topologically, residues 144–638 (MASRMQKNMG…RLVPLEEHAS (495 aa)) are cytoplasmic. 216 to 223 (GPPGTGKT) lines the ATP pocket. Histidine 440 serves as a coordination point for Zn(2+). Glutamate 441 is a catalytic residue. 2 residues coordinate Zn(2+): histidine 444 and aspartate 517.

It in the central section; belongs to the AAA ATPase family. This sequence in the C-terminal section; belongs to the peptidase M41 family. In terms of assembly, homohexamer. The cofactor is Zn(2+).

It is found in the cell inner membrane. In terms of biological role, acts as a processive, ATP-dependent zinc metallopeptidase for both cytoplasmic and membrane proteins. Plays a role in the quality control of integral membrane proteins. The protein is ATP-dependent zinc metalloprotease FtsH of Helicobacter felis (strain ATCC 49179 / CCUG 28539 / NCTC 12436 / CS1).